The sequence spans 277 residues: Carbonyl reductase [NADPH] 3 (277 aa).

Ser-2 carries the N-acetylserine modification. NADP(+)-binding positions include 10-34, 38-42, 63-64, and Asn-90; these read VTGA…GDVV, RDVAR, and DI. Ser-30 bears the Phosphoserine mark. Residue Ser-140 participates in substrate binding. Tyr-194 serves as the catalytic Proton acceptor. Residues 194-198 and Asp-239 each bind NADP(+); that span reads YGVSK.

It belongs to the short-chain dehydrogenases/reductases (SDR) family. As to expression, detected in ovary, pancreas, intestine, colon, kidney, brain, thymus, lung, heart, liver, spleen, leukocyte, prostate and testis.

Its subcellular location is the cytoplasm. It carries out the reaction a secondary alcohol + NADP(+) = a ketone + NADPH + H(+). The catalysed reaction is a quinone + NADPH + H(+) = a quinol + NADP(+). Catalyzes the NADPH-dependent reduction of carbonyl compounds to their corresponding alcohols. Has low NADPH-dependent oxidoreductase activity. Acts on several orthoquinones, acts as well on non-quinone compounds, such as isatin or on the anticancer drug oracin. Best substrates for CBR3 is 1,2- naphthoquinone, hence could play a role in protection against cytotoxicity of exogenous quinones. Exerts activity toward ortho-quinones but not paraquinones. No endogenous substrate for CBR3 except isatin has been identified. In Homo sapiens (Human), this protein is Carbonyl reductase [NADPH] 3.